Consider the following 190-residue polypeptide: Iron-sulfur protein (190 aa).

One can recognise a 4Fe-4S ferredoxin-type 1 domain in the interval 8-36 (VIIYANPDHCLSCHSCELACAVAHSGGHD). 16 residues coordinate [4Fe-4S] cluster: Cys-17, Cys-20, Cys-23, Cys-27, Cys-65, Cys-68, Cys-73, Cys-77, Cys-96, Cys-99, Cys-102, Cys-106, Cys-133, Cys-136, Cys-150, and Cys-154. 4Fe-4S ferredoxin-type domains follow at residues 87–116 (GQVQ…VRSE) and 133–164 (CDLC…MVDL).

Its function is as follows. The carbon monoxide dehydrogenase (CODH) oxidizes carbon monoxide coupled, via CooF, to the reduction of a hydrogen cation by a hydrogenase (probably CooH). CooF is required in stoichiometric amounts in vitro for anchoring CODH to the membrane as well as for conveying the electrons to the hydrogenase. In Rhodospirillum rubrum, this protein is Iron-sulfur protein (cooF).